The primary structure comprises 437 residues: tRNA modification GTPase MnmE (437 aa).

Positions 21, 80, and 120 each coordinate (6S)-5-formyl-5,6,7,8-tetrahydrofolate. Residues glycine 218–glycine 361 enclose the TrmE-type G domain. Asparagine 228 contributes to the K(+) binding site. GTP is bound by residues asparagine 228–threonine 233, serine 247–threonine 253, and aspartate 272–glycine 275. Residue serine 232 coordinates Mg(2+). Residues serine 247, isoleucine 249, and threonine 252 each contribute to the K(+) site. Threonine 253 is a Mg(2+) binding site. Position 437 (lysine 437) interacts with (6S)-5-formyl-5,6,7,8-tetrahydrofolate.

It belongs to the TRAFAC class TrmE-Era-EngA-EngB-Septin-like GTPase superfamily. TrmE GTPase family. Homodimer. Heterotetramer of two MnmE and two MnmG subunits. K(+) serves as cofactor.

The protein localises to the cytoplasm. Exhibits a very high intrinsic GTPase hydrolysis rate. Involved in the addition of a carboxymethylaminomethyl (cmnm) group at the wobble position (U34) of certain tRNAs, forming tRNA-cmnm(5)s(2)U34. This chain is tRNA modification GTPase MnmE, found in Methylobacterium sp. (strain 4-46).